The following is a 506-amino-acid chain: GMP synthase [glutamine-hydrolyzing] (506 aa).

In terms of domain architecture, Glutamine amidotransferase type-1 spans 4 to 192 (KLIILDFGSQ…FLDICGMKRD (189 aa)). Catalysis depends on Cys79, which acts as the Nucleophile. Catalysis depends on residues His167 and Glu169. The region spanning 193–381 (WTPASFIEAT…LGMMPHLIHR (189 aa)) is the GMPS ATP-PPase domain. An ATP-binding site is contributed by 220 to 226 (SGGVDSS).

As to quaternary structure, homodimer.

It carries out the reaction XMP + L-glutamine + ATP + H2O = GMP + L-glutamate + AMP + diphosphate + 2 H(+). It participates in purine metabolism; GMP biosynthesis; GMP from XMP (L-Gln route): step 1/1. Its function is as follows. Catalyzes the synthesis of GMP from XMP. This Porphyromonas gingivalis (strain ATCC 33277 / DSM 20709 / CIP 103683 / JCM 12257 / NCTC 11834 / 2561) protein is GMP synthase [glutamine-hydrolyzing].